The primary structure comprises 1171 residues: Myosin-B/C (1171 aa).

A Myosin motor domain is found at 105 to 780; it reads ETVDDIGYLP…AAKELSILQR (676 aa). Position 199-206 (199-206) interacts with ATP; sequence GESGAGKT. An actin-binding region spans residues 671–681; it reads AHFIRCLKPNE. A tail region spans residues 810 to 1171; the sequence is IHFLTRLESN…CFEACAPDRP (362 aa).

It belongs to the TRAFAC class myosin-kinesin ATPase superfamily. Myosin family.

Its subcellular location is the cytoplasm. In terms of biological role, myosins are actin-based motor molecules with ATPase activity. Unconventional myosins serve in intracellular movements. Their highly divergent tails are presumed to bind to membranous compartments, which would be moved relative to actin filaments. Plays a role in proper daughter cell budding and separation. This Toxoplasma gondii protein is Myosin-B/C.